The sequence spans 72 residues: Translation initiation factor IF-1 (72 aa).

Residues 1 to 72 form the S1-like domain; that stretch reads MSKEEAIEVE…TRGRITYRAK (72 aa).

It belongs to the IF-1 family. Component of the 30S ribosomal translation pre-initiation complex which assembles on the 30S ribosome in the order IF-2 and IF-3, IF-1 and N-formylmethionyl-tRNA(fMet); mRNA recruitment can occur at any time during PIC assembly.

The protein resides in the cytoplasm. Its function is as follows. One of the essential components for the initiation of protein synthesis. Stabilizes the binding of IF-2 and IF-3 on the 30S subunit to which N-formylmethionyl-tRNA(fMet) subsequently binds. Helps modulate mRNA selection, yielding the 30S pre-initiation complex (PIC). Upon addition of the 50S ribosomal subunit IF-1, IF-2 and IF-3 are released leaving the mature 70S translation initiation complex. In Geotalea uraniireducens (strain Rf4) (Geobacter uraniireducens), this protein is Translation initiation factor IF-1.